Here is a 159-residue protein sequence, read N- to C-terminus: Ribonuclease H (159 aa).

Residues 1-142 enclose the RNase H type-1 domain; that stretch reads MHKQVEIFTD…CDELAKAAAQ (142 aa). Residues Asp10, Glu48, Asp70, and Asp134 each coordinate Mg(2+). The segment at 135-159 is disordered; it reads ELAKAAAQSPTKEDTGYLESQQDKT. Basic and acidic residues predominate over residues 145 to 159; it reads TKEDTGYLESQQDKT.

Belongs to the RNase H family. As to quaternary structure, monomer. Mg(2+) is required as a cofactor.

The protein localises to the cytoplasm. The enzyme catalyses Endonucleolytic cleavage to 5'-phosphomonoester.. In terms of biological role, endonuclease that specifically degrades the RNA of RNA-DNA hybrids. The protein is Ribonuclease H of Proteus mirabilis (strain HI4320).